The primary structure comprises 297 residues: 4-hydroxy-tetrahydrodipicolinate synthase (297 aa).

A pyruvate-binding site is contributed by Thr-47. Tyr-136 acts as the Proton donor/acceptor in catalysis. The active-site Schiff-base intermediate with substrate is Lys-165. Position 206 (Ile-206) interacts with pyruvate.

This sequence belongs to the DapA family. Homotetramer; dimer of dimers.

The protein resides in the cytoplasm. The enzyme catalyses L-aspartate 4-semialdehyde + pyruvate = (2S,4S)-4-hydroxy-2,3,4,5-tetrahydrodipicolinate + H2O + H(+). It functions in the pathway amino-acid biosynthesis; L-lysine biosynthesis via DAP pathway; (S)-tetrahydrodipicolinate from L-aspartate: step 3/4. Its function is as follows. Catalyzes the condensation of (S)-aspartate-beta-semialdehyde [(S)-ASA] and pyruvate to 4-hydroxy-tetrahydrodipicolinate (HTPA). The polypeptide is 4-hydroxy-tetrahydrodipicolinate synthase (Campylobacter concisus (strain 13826)).